The chain runs to 329 residues: Uroporphyrinogen decarboxylase (329 aa).

Substrate contacts are provided by residues 22–26 (RQVGR), D71, Y140, S195, and H307.

This sequence belongs to the uroporphyrinogen decarboxylase family. Homodimer.

Its subcellular location is the cytoplasm. The catalysed reaction is uroporphyrinogen III + 4 H(+) = coproporphyrinogen III + 4 CO2. Its pathway is porphyrin-containing compound metabolism; protoporphyrin-IX biosynthesis; coproporphyrinogen-III from 5-aminolevulinate: step 4/4. Its function is as follows. Catalyzes the decarboxylation of four acetate groups of uroporphyrinogen-III to yield coproporphyrinogen-III. The protein is Uroporphyrinogen decarboxylase of Chlamydia pneumoniae (Chlamydophila pneumoniae).